Reading from the N-terminus, the 382-residue chain is Diphosphomevalonate decarboxylase ERG19 (382 aa).

(R)-5-diphosphomevalonate is bound by residues 22-25, Arg-78, 157-162, and Thr-213; these read YWGK and SGSACR.

It belongs to the diphosphomevalonate decarboxylase family. Homodimer.

The catalysed reaction is (R)-5-diphosphomevalonate + ATP = isopentenyl diphosphate + ADP + phosphate + CO2. It participates in isoprenoid biosynthesis; isopentenyl diphosphate biosynthesis via mevalonate pathway; isopentenyl diphosphate from (R)-mevalonate: step 3/3. Diphosphomevalonate decarboxylase; part of the second module of ergosterol biosynthesis pathway that includes the middle steps of the pathway. MVD1 converts diphosphomevalonate into isopentenyl diphosphate. The second module is carried out in the vacuole and involves the formation of farnesyl diphosphate, which is also an important intermediate in the biosynthesis of ubiquinone, dolichol, heme and prenylated proteins. Activity by the mevalonate kinase ERG12 (FG05912) first converts mevalonate into 5-phosphomevalonate. 5-phosphomevalonate is then further converted to 5-diphosphomevalonate by the phosphomevalonate kinase ERG8 (FG09764). The diphosphomevalonate decarboxylase ERG19 (FG10424) then produces isopentenyl diphosphate. The isopentenyl-diphosphate delta-isomerase IDI1 (FG09722) then catalyzes the 1,3-allylic rearrangement of the homoallylic substrate isopentenyl (IPP) to its highly electrophilic allylic isomer, dimethylallyl diphosphate (DMAPP). Finally the farnesyl diphosphate synthase ERG20 (FG06784) catalyzes the sequential condensation of isopentenyl pyrophosphate with dimethylallyl pyrophosphate, and then with the resultant geranylpyrophosphate to the ultimate product farnesyl pyrophosphate. The polypeptide is Diphosphomevalonate decarboxylase ERG19 (Gibberella zeae (strain ATCC MYA-4620 / CBS 123657 / FGSC 9075 / NRRL 31084 / PH-1) (Wheat head blight fungus)).